Consider the following 694-residue polypeptide: Elongation factor G (694 aa).

Residues 9-288 form the tr-type G domain; the sequence is DAIRNIGIMA…VIVKWLPSPL (280 aa). Residues 18-25, 82-86, and 136-139 contribute to the GTP site; these read AHIDAGKT, DTPGH, and NKMD.

It belongs to the TRAFAC class translation factor GTPase superfamily. Classic translation factor GTPase family. EF-G/EF-2 subfamily.

It is found in the cytoplasm. Catalyzes the GTP-dependent ribosomal translocation step during translation elongation. During this step, the ribosome changes from the pre-translocational (PRE) to the post-translocational (POST) state as the newly formed A-site-bound peptidyl-tRNA and P-site-bound deacylated tRNA move to the P and E sites, respectively. Catalyzes the coordinated movement of the two tRNA molecules, the mRNA and conformational changes in the ribosome. This Chlamydia trachomatis serovar A (strain ATCC VR-571B / DSM 19440 / HAR-13) protein is Elongation factor G.